The following is a 505-amino-acid chain: Chromosomal replication initiator protein DnaA (505 aa).

A domain I, interacts with DnaA modulators region spans residues 1-90; that stretch reads MSVELWQQCV…RRSSAPRAAP (90 aa). Positions 91–168 are domain II; it reads NAPVSAAVAA…QVEGALKHTS (78 aa). The segment at 169–385 is domain III, AAA+ region; the sequence is YLNRTFTFDT…GALKRVIAHS (217 aa). Residues Gly213, Gly215, Lys216, and Thr217 each contribute to the ATP site. The segment at 386-505 is domain IV, binds dsDNA; it reads HFMGRDITIE…YKNLLRTLTT (120 aa).

It belongs to the DnaA family. As to quaternary structure, oligomerizes as a right-handed, spiral filament on DNA at oriC.

Its subcellular location is the cytoplasm. In terms of biological role, plays an essential role in the initiation and regulation of chromosomal replication. ATP-DnaA binds to the origin of replication (oriC) to initiate formation of the DNA replication initiation complex once per cell cycle. Binds the DnaA box (a 9 base pair repeat at the origin) and separates the double-stranded (ds)DNA. Forms a right-handed helical filament on oriC DNA; dsDNA binds to the exterior of the filament while single-stranded (ss)DNA is stabiized in the filament's interior. The ATP-DnaA-oriC complex binds and stabilizes one strand of the AT-rich DNA unwinding element (DUE), permitting loading of DNA polymerase. After initiation quickly degrades to an ADP-DnaA complex that is not apt for DNA replication. Binds acidic phospholipids. The sequence is that of Chromosomal replication initiator protein DnaA from Pseudomonas putida (strain ATCC 700007 / DSM 6899 / JCM 31910 / BCRC 17059 / LMG 24140 / F1).